Consider the following 354-residue polypeptide: Serum paraoxonase/arylesterase 2 (354 aa).

Cys42 and Cys352 are oxidised to a cystine. Residues Glu53 and Asp54 each coordinate Ca(2+). His114 (proton acceptor) is an active-site residue. Ile116, Asn167, Asp168, and Asn223 together coordinate Ca(2+). N-linked (GlcNAc...) asparagine glycosylation is present at Asn254. Ca(2+) is bound by residues Asp268 and Asn269. Residues Asn269 and Asn323 are each glycosylated (N-linked (GlcNAc...) asparagine).

It belongs to the paraoxonase family. As to quaternary structure, homotrimer. Ca(2+) serves as cofactor. Glycosylated. In terms of processing, the signal sequence is not cleaved.

The protein localises to the membrane. The enzyme catalyses a phenyl acetate + H2O = a phenol + acetate + H(+). The catalysed reaction is an N-acyl-L-homoserine lactone + H2O = an N-acyl-L-homoserine + H(+). In terms of biological role, capable of hydrolyzing lactones and a number of aromatic carboxylic acid esters. The protein is Serum paraoxonase/arylesterase 2 (PON2) of Bos taurus (Bovine).